The chain runs to 216 residues: UPF0502 protein Pfl01_3711 (216 aa).

Belongs to the UPF0502 family.

The protein is UPF0502 protein Pfl01_3711 of Pseudomonas fluorescens (strain Pf0-1).